The primary structure comprises 689 residues: Glycine--tRNA ligase beta subunit (689 aa).

The protein belongs to the class-II aminoacyl-tRNA synthetase family. As to quaternary structure, tetramer of two alpha and two beta subunits.

It is found in the cytoplasm. The enzyme catalyses tRNA(Gly) + glycine + ATP = glycyl-tRNA(Gly) + AMP + diphosphate. This Sodalis glossinidius (strain morsitans) protein is Glycine--tRNA ligase beta subunit.